Reading from the N-terminus, the 187-residue chain is Benzene 1,2-dioxygenase subunit beta (187 aa).

It belongs to the bacterial ring-hydroxylating dioxygenase beta subunit family. In terms of assembly, this dioxygenase system consists of four proteins: the two subunits of the hydroxylase component (BnzA and BnzB), a ferredoxin (BnzC) and a ferredoxin reductase (BnzD). The cofactor is [2Fe-2S] cluster. It depends on Fe cation as a cofactor.

It carries out the reaction benzene + NADH + O2 + H(+) = cis-1,2-dihydrobenzene-1,2-diol + NAD(+). It catalyses the reaction toluene + NADH + O2 + H(+) = (1S,2R)-3-methylcyclohexa-3,5-diene-1,2-diol + NAD(+). Its pathway is aromatic compound metabolism; benzene degradation; catechol from benzene: step 1/2. The protein operates within xenobiotic degradation; toluene degradation. It participates in xenobiotic degradation; xylene degradation. Catalyzes both the oxidation of benzene and toluene. The beta subunit may be responsible for the substrate specificity of the enzyme. In Pseudomonas putida (strain ATCC 700007 / DSM 6899 / JCM 31910 / BCRC 17059 / LMG 24140 / F1), this protein is Benzene 1,2-dioxygenase subunit beta (bnzB).